Consider the following 341-residue polypeptide: Tryptophan--tRNA ligase (341 aa).

ATP is bound by residues 11-13 and 19-20; these read RPT and GH. Residues 12-20 carry the 'HIGH' region motif; that stretch reads PTGKLHIGH. Asp-140 contacts L-tryptophan. Residues 152-154, Leu-193, and 201-205 contribute to the ATP site; these read GED and KMSKS. The 'KMSKS' region signature appears at 201–205; sequence KMSKS.

The protein belongs to the class-I aminoacyl-tRNA synthetase family. In terms of assembly, homodimer.

It is found in the cytoplasm. The enzyme catalyses tRNA(Trp) + L-tryptophan + ATP = L-tryptophyl-tRNA(Trp) + AMP + diphosphate + H(+). Functionally, catalyzes the attachment of tryptophan to tRNA(Trp). The polypeptide is Tryptophan--tRNA ligase (Clostridium longisporum).